A 921-amino-acid polypeptide reads, in one-letter code: Isoleucine--tRNA ligase 1 (921 aa).

The short motif at 57–67 (PYANGDIHMGH) is the 'HIGH' region element. An L-isoleucyl-5'-AMP-binding site is contributed by Glu-552. The 'KMSKS' region signature appears at 593-597 (KMSKS). Lys-596 contributes to the ATP binding site. 4 residues coordinate Zn(2+): Cys-888, Cys-891, Cys-908, and Cys-911.

This sequence belongs to the class-I aminoacyl-tRNA synthetase family. IleS type 1 subfamily. Monomer. Requires Zn(2+) as cofactor.

It is found in the cytoplasm. It carries out the reaction tRNA(Ile) + L-isoleucine + ATP = L-isoleucyl-tRNA(Ile) + AMP + diphosphate. In terms of biological role, catalyzes the attachment of isoleucine to tRNA(Ile). As IleRS can inadvertently accommodate and process structurally similar amino acids such as valine, to avoid such errors it has two additional distinct tRNA(Ile)-dependent editing activities. One activity is designated as 'pretransfer' editing and involves the hydrolysis of activated Val-AMP. The other activity is designated 'posttransfer' editing and involves deacylation of mischarged Val-tRNA(Ile). In Bacillus thuringiensis subsp. konkukian (strain 97-27), this protein is Isoleucine--tRNA ligase 1.